The following is a 222-amino-acid chain: RNA-binding protein KhpB (222 aa).

The jag_N domain stretch occupies residues Asp2–Ile51. Positions Lys54–Lys133 constitute a KH domain. In terms of domain architecture, R3H spans Asn138–Ser204.

It belongs to the KhpB RNA-binding protein family. Forms a complex with KhpA. Homodimer or homotrimer.

It localises to the cytoplasm. Functionally, a probable RNA chaperone. Forms a complex with KhpA which binds to cellular RNA and controls its expression. Plays a role in peptidoglycan (PG) homeostasis and cell length regulation. This is RNA-binding protein KhpB from Clostridium symbiosum (Bacteroides symbiosus).